Consider the following 250-residue polypeptide: Triosephosphate isomerase (250 aa).

9-11 contributes to the substrate binding site; it reads NWK. The active-site Electrophile is His-94. Glu-166 (proton acceptor) is an active-site residue. Residues Gly-172, Ser-212, and 233-234 contribute to the substrate site; that span reads GG.

The protein belongs to the triosephosphate isomerase family. Homodimer.

It localises to the cytoplasm. It catalyses the reaction D-glyceraldehyde 3-phosphate = dihydroxyacetone phosphate. It participates in carbohydrate biosynthesis; gluconeogenesis. The protein operates within carbohydrate degradation; glycolysis; D-glyceraldehyde 3-phosphate from glycerone phosphate: step 1/1. Functionally, involved in the gluconeogenesis. Catalyzes stereospecifically the conversion of dihydroxyacetone phosphate (DHAP) to D-glyceraldehyde-3-phosphate (G3P). This is Triosephosphate isomerase from Clostridium novyi (strain NT).